Here is a 595-residue protein sequence, read N- to C-terminus: Chaperone protein HscA homolog (595 aa).

It belongs to the heat shock protein 70 family.

Chaperone involved in the maturation of iron-sulfur cluster-containing proteins. Has a low intrinsic ATPase activity which is markedly stimulated by HscB. This is Chaperone protein HscA homolog from Rickettsia africae (strain ESF-5).